Reading from the N-terminus, the 244-residue chain is Cell division protein ZapD (244 aa).

Belongs to the ZapD family. Interacts with FtsZ.

The protein localises to the cytoplasm. Cell division factor that enhances FtsZ-ring assembly. Directly interacts with FtsZ and promotes bundling of FtsZ protofilaments, with a reduction in FtsZ GTPase activity. The sequence is that of Cell division protein ZapD from Shewanella sp. (strain MR-4).